The sequence spans 194 residues: ATP-dependent Clp protease proteolytic subunit 3 (194 aa).

The Nucleophile role is filled by S96. Residue H121 is part of the active site.

The protein belongs to the peptidase S14 family. Fourteen ClpP subunits assemble into 2 heptameric rings which stack back to back to give a disk-like structure with a central cavity, resembling the structure of eukaryotic proteasomes.

The protein localises to the cytoplasm. It catalyses the reaction Hydrolysis of proteins to small peptides in the presence of ATP and magnesium. alpha-casein is the usual test substrate. In the absence of ATP, only oligopeptides shorter than five residues are hydrolyzed (such as succinyl-Leu-Tyr-|-NHMec, and Leu-Tyr-Leu-|-Tyr-Trp, in which cleavage of the -Tyr-|-Leu- and -Tyr-|-Trp bonds also occurs).. Cleaves peptides in various proteins in a process that requires ATP hydrolysis. Has a chymotrypsin-like activity. Plays a major role in the degradation of misfolded proteins. The sequence is that of ATP-dependent Clp protease proteolytic subunit 3 from Rhizobium johnstonii (strain DSM 114642 / LMG 32736 / 3841) (Rhizobium leguminosarum bv. viciae).